The following is a 240-amino-acid chain: MLSLGLEDKVIVVTGGNRGIGAAIVKLLQEMGAKVAFTDLATDGGNTEALGVVANVTDLESMTAAAAEITDKLGPVYGVVANAGITKDNFFPKLTPADWDAVLNVNLKGVAYSIKPFIEGMYERKAGSIVAISSISGERGNVGQTNYSATKAGVIGMMKSLAREGARYGVRANAVAPGFIDTEMTLAIREDIREKITKEIPFRRFGKPEEIAWAVAFLLSPVASSYVTGEVLRVNGAHHT.

Residues 18 to 20 and 82 to 86 contribute to the NADP(+) site; these read RGI and NAGIT. Residues Ser-134 and 141–144 contribute to the substrate site; that span reads NVGQ. The active-site Proton acceptor is Tyr-147. 177–180 serves as a coordination point for NADP(+); sequence PGFI. 178–179 is a substrate binding site; it reads GF.

The protein belongs to the short-chain dehydrogenases/reductases (SDR) family.

The catalysed reaction is a (3R)-3-hydroxyacyl-CoA + NADP(+) = a 3-oxoacyl-CoA + NADPH + H(+). The protein operates within biopolymer metabolism; poly-(R)-3-hydroxybutanoate biosynthesis. Functionally, catalyzes the reduction of acetoacetyl-CoA to (R)-3-hydroxybutyryl-CoA. When expressed in E.coli with Synechocystis PhaA, PhaC and PhaE confers the ability to synthesize up to 12% (w/w) poly(3-hydroxybutyrate) (PHB) depending on the carbon source. The protein is Acetoacetyl-CoA reductase of Synechocystis sp. (strain ATCC 27184 / PCC 6803 / Kazusa).